The sequence spans 328 residues: Beta-agarase C (328 aa).

The signal sequence occupies residues 1–17 (MNLTKMAVFAASLFCLA). A propeptide spanning residues 18-67 (CKNDIDTELEKKSIPESEIQKSEEKLPNEEELTPTDPDEETNKEETVTAN) is cleaved from the precursor. Residues 26 to 45 (LEKKSIPESEIQKSEEKLPN) show a composition bias toward basic and acidic residues. The segment at 26 to 61 (LEKKSIPESEIQKSEEKLPNEEELTPTDPDEETNKE) is disordered. Positions 46–59 (EEELTPTDPDEETN) are enriched in acidic residues. The GH16 domain maps to 70 to 328 (YDFTGNTPPP…WIHTYQLVEE (259 aa)). Residues Trp-110, 119-129 (KAENSGVSDGK), 133-135 (KAT), Glu-188, Glu-193, and Arg-224 contribute to the substrate site. Catalysis depends on Glu-188, which acts as the Nucleophile. The Proton donor role is filled by Glu-193.

The protein belongs to the glycosyl hydrolase 16 family.

The protein resides in the secreted. The catalysed reaction is Hydrolysis of (1-&gt;4)-beta-D-galactosidic linkages in agarose, giving the tetramer as the predominant product.. In terms of biological role, cleaves the beta-1,4-linkages between beta-D-galactose and alpha-L-3,6-anhydro-galactose residues in agarose. Cleaves agarose in a random manner with retention of the anomeric-bond configuration, producing beta-anomers that give rise progressively to alpha-anomers when mutarotation takes place. This chain is Beta-agarase C (agaC), found in Zobellia galactanivorans (strain DSM 12802 / CCUG 47099 / CIP 106680 / NCIMB 13871 / Dsij).